The primary structure comprises 785 residues: Protein kintoun (785 aa).

2 stretches are compositionally biased toward basic and acidic residues: residues 622 to 638 (EHNEQCTDHSESERDTS) and 662 to 679 (HNIELGREHTSERDKEPK). 2 disordered regions span residues 622 to 698 (EHNE…DSHL) and 719 to 749 (KSSVQTTQESDLDEDDMPDNSDHLQNSASSN). A compositionally biased stretch (polar residues) spans 681–695 (TSCTAESTSGQQPND). A compositionally biased stretch (acidic residues) spans 728–737 (SDLDEDDMPD).

It belongs to the PIH1 family. Kintoun subfamily.

It is found in the cytoplasm. The protein resides in the dynein axonemal particle. Functionally, required for cytoplasmic pre-assembly of axonemal dyneins, thereby playing a central role in motility in cilia and flagella. Involved in pre-assembly of dynein arm complexes in the cytoplasm before intraflagellar transport loads them for the ciliary compartment. The protein is Protein kintoun of Xenopus tropicalis (Western clawed frog).